Reading from the N-terminus, the 414-residue chain is Esterase FrsA (414 aa).

This sequence belongs to the FrsA family.

The enzyme catalyses a carboxylic ester + H2O = an alcohol + a carboxylate + H(+). Its function is as follows. Catalyzes the hydrolysis of esters. This is Esterase FrsA from Enterobacter sp. (strain 638).